The following is a 378-amino-acid chain: Flap endonuclease 1 (378 aa).

An N-domain region spans residues 1 to 105 (MGIKGLNSII…HELDKRTERR (105 aa)). Aspartate 34 is a binding site for Mg(2+). DNA-binding residues include arginine 47 and arginine 71. Residues aspartate 87, glutamate 156, glutamate 158, aspartate 177, and aspartate 179 each contribute to the Mg(2+) site. Residues 120-251 (EIMKHERRLV…VTALKLIKEH (132 aa)) form an I-domain region. Position 156 (glutamate 156) interacts with DNA. Glycine 229 and aspartate 231 together coordinate DNA. Aspartate 231 is a Mg(2+) binding site. Residues 337–345 (VQGRLDSFF) form an interaction with PCNA region. Residues 356-367 (AASARKAQAAKK) are compositionally biased toward low complexity. A disordered region spans residues 356–378 (AASARKAQAAKKTNQKGKVLKRR). A compositionally biased stretch (basic residues) spans 368 to 378 (TNQKGKVLKRR).

This sequence belongs to the XPG/RAD2 endonuclease family. FEN1 subfamily. In terms of assembly, interacts with PCNA. Three molecules of FEN1 bind to one PCNA trimer with each molecule binding to one PCNA monomer. PCNA stimulates the nuclease activity without altering cleavage specificity. Mg(2+) serves as cofactor. Post-translationally, phosphorylated. Phosphorylation upon DNA damage induces relocalization to the nuclear plasma.

Its subcellular location is the nucleus. It localises to the nucleolus. The protein resides in the nucleoplasm. The protein localises to the mitochondrion. Its function is as follows. Structure-specific nuclease with 5'-flap endonuclease and 5'-3' exonuclease activities involved in DNA replication and repair. During DNA replication, cleaves the 5'-overhanging flap structure that is generated by displacement synthesis when DNA polymerase encounters the 5'-end of a downstream Okazaki fragment. It enters the flap from the 5'-end and then tracks to cleave the flap base, leaving a nick for ligation. Also involved in the long patch base excision repair (LP-BER) pathway, by cleaving within the apurinic/apyrimidinic (AP) site-terminated flap. Acts as a genome stabilization factor that prevents flaps from equilibrating into structures that lead to duplications and deletions. Also possesses 5'-3' exonuclease activity on nicked or gapped double-stranded DNA, and exhibits RNase H activity. Also involved in replication and repair of rDNA and in repairing mitochondrial DNA. The chain is Flap endonuclease 1 from Eremothecium gossypii (strain ATCC 10895 / CBS 109.51 / FGSC 9923 / NRRL Y-1056) (Yeast).